The chain runs to 713 residues: Polyribonucleotide nucleotidyltransferase (713 aa).

Positions 488 and 494 each coordinate Mg(2+). In terms of domain architecture, KH spans 555–614; it reads PQMEIIKVPTDKIRDVIGSGGKVIRGIVDETGAKVNIDDDGTVQISAMDRKSIDAAIKMI. The S1 motif domain occupies 624–692; the sequence is GEIYEGKVVS…ERGKVRLSMK (69 aa).

The protein belongs to the polyribonucleotide nucleotidyltransferase family. It depends on Mg(2+) as a cofactor.

The protein resides in the cytoplasm. The catalysed reaction is RNA(n+1) + phosphate = RNA(n) + a ribonucleoside 5'-diphosphate. Functionally, involved in mRNA degradation. Catalyzes the phosphorolysis of single-stranded polyribonucleotides processively in the 3'- to 5'-direction. In Hyphomonas neptunium (strain ATCC 15444), this protein is Polyribonucleotide nucleotidyltransferase.